The chain runs to 478 residues: NADH-quinone oxidoreductase subunit N (478 aa).

A run of 14 helical transmembrane segments spans residues 5 to 25, 37 to 57, 68 to 88, 99 to 119, 121 to 141, 156 to 176, 199 to 219, 231 to 251, 268 to 288, 293 to 313, 320 to 340, 365 to 385, 401 to 421, and 446 to 466; these read LASP…VGVA, MLTL…ALGL, FAVM…VLSL, FEFP…VSAS, FMTL…LAAF, FVLG…IYGF, LTVG…AAPF, PTPV…AMML, VVAL…IGQT, LMAY…AAGS, LLIY…CILA, ALLL…SGFF, LLWG…YYYL, and VVAV…APIL.

The protein belongs to the complex I subunit 2 family. As to quaternary structure, NDH-1 is composed of 14 different subunits. Subunits NuoA, H, J, K, L, M, N constitute the membrane sector of the complex.

The protein resides in the cell inner membrane. It catalyses the reaction a quinone + NADH + 5 H(+)(in) = a quinol + NAD(+) + 4 H(+)(out). Functionally, NDH-1 shuttles electrons from NADH, via FMN and iron-sulfur (Fe-S) centers, to quinones in the respiratory chain. The immediate electron acceptor for the enzyme in this species is believed to be ubiquinone. Couples the redox reaction to proton translocation (for every two electrons transferred, four hydrogen ions are translocated across the cytoplasmic membrane), and thus conserves the redox energy in a proton gradient. This chain is NADH-quinone oxidoreductase subunit N, found in Granulibacter bethesdensis (strain ATCC BAA-1260 / CGDNIH1).